The primary structure comprises 504 residues: Cobyric acid synthase (504 aa).

Positions 254–442 constitute a GATase cobBQ-type domain; sequence AIDVAVIRYP…MHDLFHNDMF (189 aa). Cysteine 336 functions as the Nucleophile in the catalytic mechanism. Histidine 434 is a catalytic residue.

This sequence belongs to the CobB/CobQ family. CobQ subfamily.

It participates in cofactor biosynthesis; adenosylcobalamin biosynthesis. Catalyzes amidations at positions B, D, E, and G on adenosylcobyrinic A,C-diamide. NH(2) groups are provided by glutamine, and one molecule of ATP is hydrogenolyzed for each amidation. The sequence is that of Cobyric acid synthase from Anoxybacillus flavithermus (strain DSM 21510 / WK1).